The primary structure comprises 2464 residues: Nonribosomal peptide synthetase NPS2 (2464 aa).

An adenylation 1 region spans residues 275–670; that stretch reads DDHHPGTSQP…GRIDTQIKLR (396 aa). The region spanning 814–888 is the Carrier 1 domain; the sequence is TKAEGQLLEI…QIAKALDASS (75 aa). S848 carries the O-(pantetheine 4'-phosphoryl)serine modification. A condensation 1 region spans residues 924–1325; it reads IYPPFPLQEG…EGLALDLAQG (402 aa). The Carrier 2 domain occupies 1364-1437; the sequence is EDLLLRLRKI…RMAASAGKKI (74 aa). S1398 is subject to O-(pantetheine 4'-phosphoryl)serine. The condensation 2 stretch occupies residues 1479–1887; the sequence is DVFPVTTLQA…LRVLVDDLDA (409 aa). Residues 1917 to 1993 enclose the Carrier 3 domain; the sequence is SSWDEKSSTL…DLVMRAGAED (77 aa). Residue S1954 is modified to O-(pantetheine 4'-phosphoryl)serine. Positions 2047–2340 are condensation 3; the sequence is GGSRYQHVFG…ATQIQDDLRE (294 aa).

This sequence belongs to the NRP synthetase family.

Its pathway is siderophore biosynthesis. In terms of biological role, nonribosomal peptide synthetase; part of the siderophore basidioferrin biosynthetic pathway. The biosynthesis of basidioferrin depends on the hydroxylation of ornithine to N(5)-hydroxyornithine, catalyzed by the monooxygenase SMO1. The second step, the acylation of N(5)-hydroxy-L-ornithine is catalyzed by a not yet identified N-acyltransferase. Finally, assembly of basidioferrin is catalyzed by the nonribosomal peptide synthase (NRPS) NPS2 via amide bond formation between three L-AHO molecules to release the linear L-AHO trimer. N-5-acetyl-N-5-hydroxy-L-ornithine (L-AHO) and N-5-cis-anhydromevalonyl-N-5-hydroxy-L-ornithine (L-AMHO) are accepted as the substrates by the NPS2 adenylation (A) domain, but only L-AHO is trimerized. The polypeptide is Nonribosomal peptide synthetase NPS2 (Ceriporiopsis subvermispora (strain B) (White-rot fungus)).